Consider the following 520-residue polypeptide: Nuclear GTP-binding protein NUG1 (520 aa).

Basic residues-rich tracts occupy residues 1–13 (MRVRKRQSRRTST) and 21–34 (KKASAHRKKEKKMA). The tract at residues 1–53 (MRVRKRQSRRTSTKLKEGIKKKASAHRKKEKKMAKKDVTWRSRSKKDPGIPSN) is disordered. The segment covering 35–48 (KKDVTWRSRSKKDP) has biased composition (basic and acidic residues). The region spanning 165-343 (YDKIFKSVID…ILDSPGICFP (179 aa)) is the CP-type G domain. GTP is bound by residues 213-216 (NKVD), 287-294 (GYPNVGKS), and 336-339 (DSPG). Ser337 is modified (phosphoserine).

Belongs to the TRAFAC class YlqF/YawG GTPase family.

Its subcellular location is the nucleus. Its function is as follows. GTPase required for 60S ribosomal subunit export to the cytoplasm. The polypeptide is Nuclear GTP-binding protein NUG1 (NUG1) (Saccharomyces cerevisiae (strain ATCC 204508 / S288c) (Baker's yeast)).